The chain runs to 207 residues: Thymidine kinase (207 aa).

Residues 15–22 and 88–91 contribute to the ATP site; these read GSMFSGKS and DEVQ. Glu-89 acts as the Proton acceptor in catalysis. Positions 145, 148, 183, and 186 each coordinate Zn(2+).

The protein belongs to the thymidine kinase family. Homotetramer.

Its subcellular location is the cytoplasm. It catalyses the reaction thymidine + ATP = dTMP + ADP + H(+). This Oceanobacillus iheyensis (strain DSM 14371 / CIP 107618 / JCM 11309 / KCTC 3954 / HTE831) protein is Thymidine kinase.